A 328-amino-acid polypeptide reads, in one-letter code: Probable cell division protein WhiA (328 aa).

The H-T-H motif DNA-binding region spans 275–308 (SLEELGQLASPPMTKDAVAGRIRRLLSMADKRAE).

Belongs to the WhiA family.

In terms of biological role, involved in cell division and chromosome segregation. The sequence is that of Probable cell division protein WhiA from Corynebacterium urealyticum (strain ATCC 43042 / DSM 7109).